The sequence spans 191 residues: Peptidyl-tRNA hydrolase (191 aa).

A tRNA-binding site is contributed by Y15. The active-site Proton acceptor is the H20. Residues F66, N68, and N114 each coordinate tRNA.

Belongs to the PTH family. Monomer.

It is found in the cytoplasm. It catalyses the reaction an N-acyl-L-alpha-aminoacyl-tRNA + H2O = an N-acyl-L-amino acid + a tRNA + H(+). Functionally, hydrolyzes ribosome-free peptidyl-tRNAs (with 1 or more amino acids incorporated), which drop off the ribosome during protein synthesis, or as a result of ribosome stalling. Its function is as follows. Catalyzes the release of premature peptidyl moieties from peptidyl-tRNA molecules trapped in stalled 50S ribosomal subunits, and thus maintains levels of free tRNAs and 50S ribosomes. The polypeptide is Peptidyl-tRNA hydrolase (Streptococcus agalactiae serotype Ia (strain ATCC 27591 / A909 / CDC SS700)).